A 480-amino-acid chain; its full sequence is MAKVYKDLREFLEVLEQEGQLIRVKEEVNPEPDIAAAGRAAANLGKNQPAVFFEKIKGYKYSVVTNVHGSWQNHALMLGLDKNTSTKDQFYELNRRWDKFPVPPNVVKREAAPCKENVIDKDINLFEILPLYRINEQDGGFYISKASVVTADPEYPDDFNKLNVGTYRIQVKDRDRVGIQALAMHDIAVQLEKAEAENKPLPIAITIGNNPLVTFMASTPVGYNQNEYEFVGALQDGVPMDIVKSDLYDHLYVPAGSEVVLEGHIIPRVRTVEGPFGEFPGSYSGARLQCEVKIDRITHRTNPIFENLYLGIPWTEIDYLMALNTSVPLYKQLKETMPEVVAVNAMYTHGIGVIISTKVRYGGYAKGVAFRLLSTPHGMPYSKIVIVVDEFVDPFNLEQVMWALTTRVHPGKDVSIIENCPGMPLDPSTNPPGMHTKMIIDATTPVPPEPNPRETQLLDPPDGTEEWEEKLKELLKNQNR.

Mn(2+) contacts are provided by Asn-163, His-185, and Glu-227. Prenylated FMN is bound by residues 163–168 (NVGTYR) and 184–185 (MH). Catalysis depends on Glu-278, which acts as the Proton donor. Positions 443-466 (TTPVPPEPNPRETQLLDPPDGTEE) are disordered.

It belongs to the UbiD family. YclC subfamily. In terms of assembly, homohexamer. It depends on prenylated FMN as a cofactor. Requires Mn(2+) as cofactor.

The enzyme catalyses 4-hydroxybenzoate + H(+) = phenol + CO2. The catalysed reaction is 3,4-dihydroxybenzoate + H(+) = catechol + CO2. With respect to regulation, inhibited by Zn(2+), (2,3,4)-trihydroxybenzoate and (3,4,5)-trihydroxybenzoate. Ammonium and rubidium ions decrease the activity of the carboxylation of 3,4-dihydroxybenzoate by about 20%. In terms of biological role, involved in the non-oxidative decarboxylation and detoxification of phenolic derivatives under anaerobic conditions. Oxygen-sensitive phenolic acid decarboxylase that catalyzes the reversible decarboxylation of 4-hydroxybenzoate and 3,4-dihydroxybenzoate. The polypeptide is Phenolic acid decarboxylase (Sedimentibacter hydroxybenzoicus (Clostridium hydroxybenzoicum)).